A 233-amino-acid polypeptide reads, in one-letter code: Ribose-5-phosphate isomerase A (233 aa).

Residues 28-31, 83-86, and 96-99 each bind substrate; these read SGST, DGAD, and KGGG. The active-site Proton acceptor is the Glu105. Substrate is bound at residue Lys123.

It belongs to the ribose 5-phosphate isomerase family. As to quaternary structure, homodimer.

It carries out the reaction aldehydo-D-ribose 5-phosphate = D-ribulose 5-phosphate. It functions in the pathway carbohydrate degradation; pentose phosphate pathway; D-ribose 5-phosphate from D-ribulose 5-phosphate (non-oxidative stage): step 1/1. In terms of biological role, catalyzes the reversible conversion of ribose-5-phosphate to ribulose 5-phosphate. This Bartonella bacilliformis (strain ATCC 35685 / KC583 / Herrer 020/F12,63) protein is Ribose-5-phosphate isomerase A.